We begin with the raw amino-acid sequence, 200 residues long: NADH-quinone oxidoreductase subunit C (200 aa).

The protein belongs to the complex I 30 kDa subunit family. In terms of assembly, NDH-1 is composed of 14 different subunits. Subunits NuoB, C, D, E, F, and G constitute the peripheral sector of the complex.

The protein localises to the cell inner membrane. It catalyses the reaction a quinone + NADH + 5 H(+)(in) = a quinol + NAD(+) + 4 H(+)(out). Its function is as follows. NDH-1 shuttles electrons from NADH, via FMN and iron-sulfur (Fe-S) centers, to quinones in the respiratory chain. The immediate electron acceptor for the enzyme in this species is believed to be ubiquinone. Couples the redox reaction to proton translocation (for every two electrons transferred, four hydrogen ions are translocated across the cytoplasmic membrane), and thus conserves the redox energy in a proton gradient. This chain is NADH-quinone oxidoreductase subunit C, found in Cereibacter sphaeroides (strain ATCC 17029 / ATH 2.4.9) (Rhodobacter sphaeroides).